Consider the following 282-residue polypeptide: Large ribosomal subunit protein uL2 (282 aa).

A disordered region spans residues 215–282 (RHKGIRPTVR…IIRSRKETKK (68 aa)). The segment covering 263–282 (RNPKKPSTKLIIRSRKETKK) has biased composition (basic residues).

It belongs to the universal ribosomal protein uL2 family. Part of the 50S ribosomal subunit. Forms a bridge to the 30S subunit in the 70S ribosome.

Its function is as follows. One of the primary rRNA binding proteins. Required for association of the 30S and 50S subunits to form the 70S ribosome, for tRNA binding and peptide bond formation. It has been suggested to have peptidyltransferase activity; this is somewhat controversial. Makes several contacts with the 16S rRNA in the 70S ribosome. The polypeptide is Large ribosomal subunit protein uL2 (Mesomycoplasma hyopneumoniae (strain 7448) (Mycoplasma hyopneumoniae)).